A 55-amino-acid chain; its full sequence is Large ribosomal subunit protein bL33 (55 aa).

Belongs to the bacterial ribosomal protein bL33 family.

The chain is Large ribosomal subunit protein bL33 from Alcanivorax borkumensis (strain ATCC 700651 / DSM 11573 / NCIMB 13689 / SK2).